The following is a 246-amino-acid chain: 1-(5-phosphoribosyl)-5-[(5-phosphoribosylamino)methylideneamino] imidazole-4-carboxamide isomerase (246 aa).

Asp7 acts as the Proton acceptor in catalysis. Asp129 functions as the Proton donor in the catalytic mechanism.

This sequence belongs to the HisA/HisF family.

The protein localises to the cytoplasm. The catalysed reaction is 1-(5-phospho-beta-D-ribosyl)-5-[(5-phospho-beta-D-ribosylamino)methylideneamino]imidazole-4-carboxamide = 5-[(5-phospho-1-deoxy-D-ribulos-1-ylimino)methylamino]-1-(5-phospho-beta-D-ribosyl)imidazole-4-carboxamide. It functions in the pathway amino-acid biosynthesis; L-histidine biosynthesis; L-histidine from 5-phospho-alpha-D-ribose 1-diphosphate: step 4/9. The chain is 1-(5-phosphoribosyl)-5-[(5-phosphoribosylamino)methylideneamino] imidazole-4-carboxamide isomerase from Buchnera aphidicola subsp. Acyrthosiphon pisum (strain 5A).